Consider the following 309-residue polypeptide: Putative glycosyltransferase 48 (309 aa).

It belongs to the glycosyltransferase group 1 family. Glycosyltransferase 4 subfamily.

The chain is Putative glycosyltransferase 48 (SIFV0048) from Saccharolobus islandicus (Sulfolobus islandicus).